A 92-amino-acid polypeptide reads, in one-letter code: YcgL domain-containing protein Shewmr7_2249 (92 aa).

The YcgL domain maps to 1-85 (MLCAVYKSSR…PQVNLLAEHR (85 aa)).

This chain is YcgL domain-containing protein Shewmr7_2249, found in Shewanella sp. (strain MR-7).